The following is a 283-amino-acid chain: Transmembrane protein 119 (283 aa).

The first 25 residues, 1 to 25 (MVSAAAPSLLILLLLLLGSVPATDA), serve as a signal peptide directing secretion. Over 26–96 (RSVPLKATFL…IVDFFRQYVM (71 aa)) the chain is Extracellular. Residue S41 is glycosylated (O-linked (Xyl...) (chondroitin sulfate) serine). Over residues 43 to 52 (EAEGSSASSP) the composition is skewed to low complexity. The tract at residues 43–76 (EAEGSSASSPSLPPPWTPALSPTSMGPQPITLGG) is disordered. Residues 97–117 (LIAVVGSLAFLLMFIVCAAVI) traverse the membrane as a helical segment. Residues 118–283 (TRQKQKASAY…CACSSVHPSV (166 aa)) lie on the Cytoplasmic side of the membrane. Disordered regions lie at residues 136-168 (KYVD…ALDS) and 183-283 (LKSP…HPSV). Basic and acidic residues-rich tracts occupy residues 153–164 (VPDRAPDSRPEE) and 198–213 (RMVE…KGSQ). Residues 238–264 (GVLEGAVVAGEGQGELEGSLLLAQEAQ) show a composition bias toward low complexity. A Phosphoserine modification is found at S272.

Interacts with SMAD1, SMAD5 and RUNX2. As to expression, expressed in brain microglia (at protein level). Detected in urine (at protein level). Elevated expression levels seen in the brain of patients with Alzheimer disease. Expressed by osteoblast-like cells in bone tissues and follicular dendritic cells in lymphoid tissues.

The protein localises to the cell membrane. Its subcellular location is the cytoplasm. The protein resides in the endoplasmic reticulum membrane. It localises to the secreted. Its function is as follows. Plays an important role in bone formation and normal bone mineralization. Promotes the differentiation of myoblasts into osteoblasts. May induce the commitment and differentiation of myoblasts into osteoblasts through an enhancement of BMP2 production and interaction with the BMP-RUNX2 pathway. Up-regulates the expression of ATF4, a transcription factor which plays a central role in osteoblast differentiation. Essential for normal spermatogenesis and late testicular differentiation. This chain is Transmembrane protein 119 (TMEM119), found in Homo sapiens (Human).